A 366-amino-acid chain; its full sequence is tRNA-specific 2-thiouridylase MnmA (366 aa).

ATP-binding positions include 6–13 (AMSGGVDS) and leucine 32. Cysteine 101 acts as the Nucleophile in catalysis. The cysteines at positions 101 and 197 are disulfide-linked. Glycine 125 is an ATP binding site. Residues 147–149 (KDQ) form an interaction with tRNA region. The Cysteine persulfide intermediate role is filled by cysteine 197.

The protein belongs to the MnmA/TRMU family.

The protein localises to the cytoplasm. The catalysed reaction is S-sulfanyl-L-cysteinyl-[protein] + uridine(34) in tRNA + AH2 + ATP = 2-thiouridine(34) in tRNA + L-cysteinyl-[protein] + A + AMP + diphosphate + H(+). Functionally, catalyzes the 2-thiolation of uridine at the wobble position (U34) of tRNA, leading to the formation of s(2)U34. The chain is tRNA-specific 2-thiouridylase MnmA from Cutibacterium acnes (strain DSM 16379 / KPA171202) (Propionibacterium acnes).